The sequence spans 161 residues: Small ribosomal subunit protein uS9 (161 aa).

Belongs to the universal ribosomal protein uS9 family.

This chain is Small ribosomal subunit protein uS9, found in Bartonella tribocorum (strain CIP 105476 / IBS 506).